The sequence spans 342 residues: N-acetyl-gamma-glutamyl-phosphate reductase (342 aa).

Cys-149 is an active-site residue.

It belongs to the NAGSA dehydrogenase family. Type 1 subfamily.

The protein localises to the cytoplasm. The catalysed reaction is N-acetyl-L-glutamate 5-semialdehyde + phosphate + NADP(+) = N-acetyl-L-glutamyl 5-phosphate + NADPH + H(+). Its pathway is amino-acid biosynthesis; L-arginine biosynthesis; N(2)-acetyl-L-ornithine from L-glutamate: step 3/4. Its function is as follows. Catalyzes the NADPH-dependent reduction of N-acetyl-5-glutamyl phosphate to yield N-acetyl-L-glutamate 5-semialdehyde. The sequence is that of N-acetyl-gamma-glutamyl-phosphate reductase from Ruegeria pomeroyi (strain ATCC 700808 / DSM 15171 / DSS-3) (Silicibacter pomeroyi).